The chain runs to 76 residues: Putative membrane protein insertion efficiency factor (76 aa).

It belongs to the UPF0161 family.

It localises to the cell inner membrane. Functionally, could be involved in insertion of integral membrane proteins into the membrane. The chain is Putative membrane protein insertion efficiency factor from Paraburkholderia phytofirmans (strain DSM 17436 / LMG 22146 / PsJN) (Burkholderia phytofirmans).